We begin with the raw amino-acid sequence, 281 residues long: Putative zinc-binding protein ORF11 (281 aa).

The protein is Putative zinc-binding protein ORF11 (ORF11) of Ictaluridae (bullhead catfishes).